The sequence spans 184 residues: MKLLAIVGTNADFSYNRFLDQFMAKRYKDQAEIEVYEIADLPRFKKEAQPDSKVEEFKNKIREADGVIFATPEYDHGIPSALKSAMEWTGSHAQGNADVMKMKPAMVLGTSYGIQGASRAQEEMREILLSPDQSANVLPGNEVLIGHAADKFDKNTGDLLDQETIHAIDLAFNNFVKFVEQAQK.

This sequence belongs to the NADH-dependent flavin reductase family. As to quaternary structure, requires LJ_0548 for activity, but the exact composition of the enzyme is unclear.

It catalyses the reaction a reduced flavin + NAD(+) = an oxidized flavin + NADH + 2 H(+). Component of an enzyme that catalyzes the reduction of free flavins (FMN, FAD and riboflavin) by NADH; the reduced flavins produced by this reaction likely spontaneously react with oxygen, yielding hydrogen peroxide. Is responsible for the major H(2)O(2) production in L.johnsonii in the presence of oxygen. Cannot use NADPH instead of NADH as the electron donor. This chain is NADH-dependent flavin reductase subunit 2 (nfr2), found in Lactobacillus johnsonii (strain CNCM I-12250 / La1 / NCC 533).